The chain runs to 195 residues: Probable GTP-binding protein EngB (195 aa).

The 173-residue stretch at 22-194 (LKGEVAFVGR…LDLISTLLKE (173 aa)) folds into the EngB-type G domain. GTP contacts are provided by residues 30 to 37 (GRSNVGKS), 56 to 60 (GKTRS), 74 to 77 (DLPG), 141 to 144 (TKMD), and 173 to 175 (TSS). Mg(2+) contacts are provided by Ser37 and Thr58.

This sequence belongs to the TRAFAC class TrmE-Era-EngA-EngB-Septin-like GTPase superfamily. EngB GTPase family. Mg(2+) serves as cofactor.

In terms of biological role, necessary for normal cell division and for the maintenance of normal septation. The chain is Probable GTP-binding protein EngB from Thermotoga petrophila (strain ATCC BAA-488 / DSM 13995 / JCM 10881 / RKU-1).